Here is a 339-residue protein sequence, read N- to C-terminus: Uroporphyrinogen decarboxylase (339 aa).

Residues 21–25, Asp71, Tyr147, Ser202, and His315 each bind substrate; that span reads RQAGR.

It belongs to the uroporphyrinogen decarboxylase family. As to quaternary structure, homodimer.

The protein localises to the cytoplasm. It catalyses the reaction uroporphyrinogen III + 4 H(+) = coproporphyrinogen III + 4 CO2. The protein operates within porphyrin-containing compound metabolism; protoporphyrin-IX biosynthesis; coproporphyrinogen-III from 5-aminolevulinate: step 4/4. In terms of biological role, catalyzes the decarboxylation of four acetate groups of uroporphyrinogen-III to yield coproporphyrinogen-III. The protein is Uroporphyrinogen decarboxylase of Helicobacter pylori (strain Shi470).